Reading from the N-terminus, the 674-residue chain is Glutaminase kidney isoform, mitochondrial (674 aa).

Residues 1–54 (MMRLRGSAMLRELLLRPPAAVGAVLRRAQPLGTLCRRPRGGSRPTAGLVAAARL) constitute a mitochondrion transit peptide. Residues 56–123 (PWWGGGGRAK…PGETDAFGNS (68 aa)) form a disordered region. A compositionally biased stretch (gly residues) spans 58 to 71 (WGGGGRAKGPGAGG). Positions 89-101 (PPQQQQQQQQQPG) are enriched in low complexity. N6-succinyllysine is present on residues Lys135 and Lys169. Ser291 contacts substrate. Position 316 is an N6-acetyllysine (Lys316). The segment at 320–327 (GLRFNKLF) is highly mobile activation loop. Residues Asn340, Glu386, Asn393, Tyr419, Tyr471, and Val489 each contribute to the substrate site. ANK repeat units follow at residues 590–619 (DSRT…VNPF) and 624–653 (WNNT…QYTP). The tract at residues 652–674 (TPQGDSDDGKGNQTVHKNLDGLL) is disordered. At Ser657 the chain carries Phosphoserine.

This sequence belongs to the glutaminase family. Homotetramer, dimer of dimers. The tetramers can assemble into rod-like oligomers (in vitro), but the physiological significance of this is not clear. Interacts with RAF1 and MAP2K2. Interacts with ATCAY; the interaction is direct and may control GLS localization, negatively regulating its activity. In terms of processing, synthesized as a 74-kDa cytosolic precursor which is proteolytically processed by the mitochondrial-processing peptidase (MPP) via a 72-kDa intermediate to yield the mature mitochondrial 68- and 65-kDa subunits.

The protein resides in the mitochondrion. Its subcellular location is the cytoplasm. It is found in the cytosol. The protein localises to the mitochondrion matrix. It catalyses the reaction L-glutamine + H2O = L-glutamate + NH4(+). With respect to regulation, isoform 1 and isoform 2 are activated by phosphate, due to increased affinity for glutamine. At phosphate concentrations above 10 mM, isoform 2 is more efficient than isoform 1. In terms of biological role, catalyzes the first reaction in the primary pathway for the renal catabolism of glutamine. Plays a role in maintaining acid-base homeostasis. Regulates the levels of the neurotransmitter glutamate, the main excitatory neurotransmitter in the brain. This is Glutaminase kidney isoform, mitochondrial (Gls) from Mus musculus (Mouse).